The following is a 274-amino-acid chain: Large ribosomal subunit protein uL2cz/uL2cy (274 aa).

2 disordered regions span residues 1-25 and 224-274; these read MAIH…VKSN and NPVD…RRSK.

This sequence belongs to the universal ribosomal protein uL2 family. As to quaternary structure, part of the 50S ribosomal subunit.

The protein localises to the plastid. The protein resides in the chloroplast. This Cucumis sativus (Cucumber) protein is Large ribosomal subunit protein uL2cz/uL2cy (rpl2-A).